The primary structure comprises 155 residues: Fibroblast growth factor 1 (155 aa).

Ala-2 is modified (N-acetylalanine). The propeptide occupies 2–15 (AEGEITTFTALTEK). A Nuclear localization signal motif is present at residues 24 to 27 (KKPK). Heparin is bound at residue Asn-33. The segment at 127–143 (KKNGSCKRGPRTHYGQK) is heparin-binding.

The protein belongs to the heparin-binding growth factors family. In terms of assembly, monomer. Homodimer. Interacts with FGFR1, FGFR2, FGFR3 and FGFR4. Affinity between fibroblast growth factors (FGFs) and their receptors is increased by heparan sulfate glycosaminoglycans that function as coreceptors. Found in a complex with FGFBP1, FGF1 and FGF2. Interacts with FGFBP1. Part of a Cu(2+)-dependent multiprotein aggregate containing FGF1, S100A13 and SYT1. Interacts with SYT1. Interacts with S100A13. Interacts with LRRC59. Interacts with CSNKA, CSNKB and FIBP. While binding with LRRC59, CSNKA and FIBP seem mutually exclusive, CSNKB and FIBP may cooperatively interact with FGF1. Forms a ternary complex with FGFR1 and ITGAV:ITGB3 and induces the recruitment of PTPN11 to the complex. Post-translationally, in the nucleus, phosphorylated by PKC/PRKCD. Predominantly expressed in kidney and brain. Detected at much lower levels in heart and skeletal muscle.

The protein resides in the secreted. It is found in the cytoplasm. The protein localises to the cell cortex. It localises to the cytosol. Its subcellular location is the nucleus. Plays an important role in the regulation of cell survival, cell division, angiogenesis, cell differentiation and cell migration. Functions as a potent mitogen in vitro. Acts as a ligand for FGFR1 and integrins. Binds to FGFR1 in the presence of heparin leading to FGFR1 dimerization and activation via sequential autophosphorylation on tyrosine residues which act as docking sites for interacting proteins, leading to the activation of several signaling cascades. Binds to integrin ITGAV:ITGB3. Its binding to integrin, subsequent ternary complex formation with integrin and FGFR1, and the recruitment of PTPN11 to the complex are essential for FGF1 signaling. Induces the phosphorylation and activation of FGFR1, FRS2, MAPK3/ERK1, MAPK1/ERK2 and AKT1. Can induce angiogenesis. The sequence is that of Fibroblast growth factor 1 (FGF1) from Homo sapiens (Human).